The sequence spans 256 residues: uncharacterized protein (256 aa).

The signal sequence occupies residues 1–24; sequence MIKRVNKLVLGISFLFLIISIFAG. Residue cysteine 25 is the site of N-palmitoyl cysteine attachment. Cysteine 25 is lipidated: S-diacylglycerol cysteine.

The protein belongs to the staphylococcal tandem lipoprotein family.

The protein resides in the cell membrane. This is an uncharacterized protein from Staphylococcus aureus (strain Mu50 / ATCC 700699).